Here is an 81-residue protein sequence, read N- to C-terminus: RNA-binding protein Hfq (81 aa).

The 60-residue stretch at 9–68 folds into the Sm domain; sequence DPYLNILRKERVPVSIFLVNGIKLQGQIESFDQFVILLKNTVSQMVYKHAISTVVPSRTI.

It belongs to the Hfq family. Homohexamer.

Its function is as follows. RNA chaperone that binds small regulatory RNA (sRNAs) and mRNAs to facilitate mRNA translational regulation in response to envelope stress, environmental stress and changes in metabolite concentrations. Also binds with high specificity to tRNAs. This is RNA-binding protein Hfq from Marinomonas sp. (strain MWYL1).